The chain runs to 185 residues: MAETAYVPRLRAEYDNSIRTQLTEKFGYGNVMQVPRLDKVVLNMGVGEAVNDRKKAEQAAADMALIAGQKAVVTYSRVAISTFKLRENQPIGCKVTLRKAKMYEFIDRLITVALPRVRDFRGLNPKSFDGRGNYSLGIKEHIIFPEIDFDKTGESWGMDITVCTTAGTDDEARALLTAFNFPFRQ.

It belongs to the universal ribosomal protein uL5 family. In terms of assembly, part of the 50S ribosomal subunit; part of the 5S rRNA/L5/L18/L25 subcomplex. Contacts the 5S rRNA and the P site tRNA. Forms a bridge to the 30S subunit in the 70S ribosome.

In terms of biological role, this is one of the proteins that bind and probably mediate the attachment of the 5S RNA into the large ribosomal subunit, where it forms part of the central protuberance. In the 70S ribosome it contacts protein S13 of the 30S subunit (bridge B1b), connecting the 2 subunits; this bridge is implicated in subunit movement. Contacts the P site tRNA; the 5S rRNA and some of its associated proteins might help stabilize positioning of ribosome-bound tRNAs. This Rhodopseudomonas palustris (strain HaA2) protein is Large ribosomal subunit protein uL5.